The primary structure comprises 123 residues: Large ribosomal subunit protein uL29 (123 aa).

The protein belongs to the universal ribosomal protein uL29 family. Component of the large ribosomal subunit.

It is found in the cytoplasm. Its function is as follows. Component of the large ribosomal subunit. The ribosome is a large ribonucleoprotein complex responsible for the synthesis of proteins in the cell. This chain is Large ribosomal subunit protein uL29 (rpl35), found in Platichthys flesus (European flounder).